The chain runs to 79 residues: Polcalcin Bra r 1 (79 aa).

2 consecutive EF-hand domains span residues 1-36 and 39-71; these read MADAEHERIFKKFDTDGDGKISAAELEEALKKLGSV and DDVTRMMAKIDTDGDGNISFQEFTEFASANPGL. Ca(2+) is bound by residues D14, D16, D18, K20, E25, D49, D51, D53, N55, and E60.

The protein is Polcalcin Bra r 1 of Brassica campestris (Field mustard).